The following is a 103-amino-acid chain: Co-chaperonin GroES (103 aa).

This sequence belongs to the GroES chaperonin family. As to quaternary structure, heptamer of 7 subunits arranged in a ring. Interacts with the chaperonin GroEL.

The protein localises to the cytoplasm. Functionally, together with the chaperonin GroEL, plays an essential role in assisting protein folding. The GroEL-GroES system forms a nano-cage that allows encapsulation of the non-native substrate proteins and provides a physical environment optimized to promote and accelerate protein folding. GroES binds to the apical surface of the GroEL ring, thereby capping the opening of the GroEL channel. In Synechocystis sp. (strain ATCC 27184 / PCC 6803 / Kazusa), this protein is Co-chaperonin GroES.